The following is a 257-amino-acid chain: Urease accessory protein UreD (257 aa).

It belongs to the UreD family. In terms of assembly, ureD, UreF and UreG form a complex that acts as a GTP-hydrolysis-dependent molecular chaperone, activating the urease apoprotein by helping to assemble the nickel containing metallocenter of UreC. The UreE protein probably delivers the nickel.

It is found in the cytoplasm. In terms of biological role, required for maturation of urease via the functional incorporation of the urease nickel metallocenter. The chain is Urease accessory protein UreD from Ruegeria pomeroyi (strain ATCC 700808 / DSM 15171 / DSS-3) (Silicibacter pomeroyi).